The following is a 685-amino-acid chain: Glycine--tRNA ligase beta subunit (685 aa).

Belongs to the class-II aminoacyl-tRNA synthetase family. In terms of assembly, tetramer of two alpha and two beta subunits.

It localises to the cytoplasm. The catalysed reaction is tRNA(Gly) + glycine + ATP = glycyl-tRNA(Gly) + AMP + diphosphate. The protein is Glycine--tRNA ligase beta subunit of Azotobacter vinelandii (strain DJ / ATCC BAA-1303).